Here is a 160-residue protein sequence, read N- to C-terminus: Nucleotide-binding protein TERTU_3542 (160 aa).

The protein belongs to the YajQ family.

Functionally, nucleotide-binding protein. This is Nucleotide-binding protein TERTU_3542 from Teredinibacter turnerae (strain ATCC 39867 / T7901).